The primary structure comprises 425 residues: Monoacylglycerol lipase ABHD2 (425 aa).

Residues 1-9 lie on the Cytoplasmic side of the membrane; sequence MNAMLETPE. Residues 10–30 traverse the membrane as a helical; Signal-anchor for type II membrane protein segment; the sequence is LPAVFDGVKLAAVAAVLYVIV. The Extracellular segment spans residues 31 to 425; it reads RCLNLKSPTA…DTEQMEAELE (395 aa). The 255-residue stretch at 128–382 folds into the AB hydrolase-1 domain; the sequence is MVICPGIANH…HGGHLGFFEG (255 aa). N-linked (GlcNAc...) asparagine glycosylation is present at Asn-136. Ser-207 (nucleophile) is an active-site residue. Catalysis depends on charge relay system residues Asp-345 and His-376. N-linked (GlcNAc...) asparagine glycosylation occurs at Asn-410.

This sequence belongs to the AB hydrolase superfamily. AB hydrolase 4 family. As to expression, widely expressed with higher expression in testis. Expressed by vascular smooth muscle cells, non vascular smooth muscle cells and heart.

It localises to the cell membrane. Its subcellular location is the cytoplasmic vesicle. The protein localises to the secretory vesicle. It is found in the acrosome membrane. The enzyme catalyses Hydrolyzes glycerol monoesters of long-chain fatty acids.. It catalyses the reaction an acetyl ester + H2O = an aliphatic alcohol + acetate + H(+). The catalysed reaction is a triacylglycerol + H2O = a diacylglycerol + a fatty acid + H(+). It carries out the reaction 2-(5Z,8Z,11Z,14Z-eicosatetraenoyl)-glycerol + H2O = glycerol + (5Z,8Z,11Z,14Z)-eicosatetraenoate + H(+). The enzyme catalyses a butanoate ester + H2O = an aliphatic alcohol + butanoate + H(+). It catalyses the reaction hexadecanoate ester + H2O = an aliphatic alcohol + hexadecanoate + H(+). Its activity is regulated as follows. Acylglycerol lipase activity is activated upon binding to progesterone. In terms of biological role, progesterone-dependent acylglycerol lipase that catalyzes hydrolysis of endocannabinoid arachidonoylglycerol (AG) from cell membrane. Acts as a progesterone receptor: progesterone-binding activates the acylglycerol lipase activity, mediating degradation of 1-arachidonoylglycerol (1AG) and 2-arachidonoylglycerol (2AG) to glycerol and arachidonic acid (AA). Also displays an ester hydrolase activity against acetyl ester, butanoate ester and hexadecanoate ester. Plays a key role in sperm capacitation in response to progesterone by mediating degradation of 2AG, an inhibitor of the sperm calcium channel CatSper, leading to calcium influx via CatSper and sperm activation. Involved in acrosomal reaction. May also play a role in smooth muscle cells migration. This chain is Monoacylglycerol lipase ABHD2 (Abhd2), found in Mus musculus (Mouse).